Consider the following 130-residue polypeptide: Succinate dehydrogenase cytochrome b556 subunit (130 aa).

The Cytoplasmic segment spans residues 1–26 (MADVNRGNRPLSPHLQVYRLPLAAIT). Residues 27–52 (SIMTRITGHALVAGIVLITWWLVAAV) traverse the membrane as a helical segment. Topologically, residues 53-68 (TSPGAFACADWVVRSW) are periplasmic. The helical transmembrane segment at 69–89 (LGFIILTGSMWALWYHLLAGL) threads the bilayer. His84 lines the heme pocket. At 90–109 (RHLFYDAGYGLEIEQAHKSS) the chain is on the cytoplasmic side. Residues 110-130 (QALIAGSVVLAVLTLIVFFVF) traverse the membrane as a helical segment.

The protein belongs to the cytochrome b560 family. Part of an enzyme complex containing four subunits: a flavoprotein, an iron-sulfur protein, plus two membrane-anchoring proteins, SdhC and SdhD. The complex can form homotrimers. Heme is required as a cofactor.

The protein localises to the cell inner membrane. It participates in carbohydrate metabolism; tricarboxylic acid cycle. Membrane-anchoring subunit of succinate dehydrogenase (SDH). The polypeptide is Succinate dehydrogenase cytochrome b556 subunit (sdhC) (Paracoccus denitrificans).